Consider the following 258-residue polypeptide: Short-chain dehydrogenase/reductase aba4 (258 aa).

NADP(+)-binding residues include Ile-20, Asp-66, and Lys-130. Catalysis depends on proton donor residues Ser-146 and Tyr-160. NADP(+)-binding residues include Tyr-160, Lys-164, Ile-193, and Thr-195. Residue Lys-164 is the Lowers pKa of active site Tyr of the active site.

Belongs to the short-chain dehydrogenases/reductases (SDR) family.

Its pathway is hormone biosynthesis. Functionally, short-chain dehydrogenase/reductase; part of the gene cluster that mediates the biosynthesis of abscisic acid (ABA), a phytohormone that acts antagonistically toward salicylic acid (SA), jasmonic acid (JA) and ethylene (ETH) signaling, to impede plant defense responses. The first step of the pathway catalyzes the reaction from farnesyl diphosphate to alpha-ionylideneethane performed by the alpha-ionylideneethane synthase aba3 via a three-step reaction mechanism involving 2 neutral intermediates, beta-farnesene and allofarnesene. The cytochrome P450 monooxygenase aba1 might then be involved in the conversion of alpha-ionylideneethane to alpha-ionylideneacetic acid. Alpha-ionylideneacetic acid is further converted to abscisic acid in 2 steps involving the cytochrome P450 monooxygenase aba2 and the short-chain dehydrogenase/reductase aba4, via the intermediates 1'-deoxy-ABA or 1',4'-trans-diol-ABA, depending on the order of action of these 2 enzymes. Aba2 is responsible for the hydroxylation of carbon atom C-1' and aba4 might be involved in the oxidation of the C-4' carbon atom. The protein is Short-chain dehydrogenase/reductase aba4 of Botryotinia fuckeliana (Noble rot fungus).